The primary structure comprises 139 residues: MPPAKKGPATSARKGQKTRRREKKNVPHGAAHIKSTFNNTIVTITDPQGNVIAWASSGHVGFKGSRKSTPFAAQLAAENAARKAQDHGVRKVDVFVKGPGSGRETAIRSLQAAGLEVGAISDVTPQPHNGVRPPNRRRV.

Residues 1 to 33 form a disordered region; that stretch reads MPPAKKGPATSARKGQKTRRREKKNVPHGAAHI. Basic residues predominate over residues 14–23; that stretch reads KGQKTRRREK.

The protein belongs to the universal ribosomal protein uS11 family. In terms of assembly, part of the 30S ribosomal subunit. Interacts with proteins S7 and S18. Binds to IF-3.

Its function is as follows. Located on the platform of the 30S subunit, it bridges several disparate RNA helices of the 16S rRNA. Forms part of the Shine-Dalgarno cleft in the 70S ribosome. This chain is Small ribosomal subunit protein uS11, found in Mycobacterium bovis (strain ATCC BAA-935 / AF2122/97).